Consider the following 280-residue polypeptide: Eukaryotic translation initiation factor 3 subunit F-1 (280 aa).

Residues 8–138 (VRVHPVVLFQ…LRAYVCIQLG (131 aa)) enclose the MPN domain.

The protein belongs to the eIF-3 subunit F family. In terms of assembly, component of the eukaryotic translation initiation factor 3 (eIF-3) complex. The eIF-3 complex interacts with pix.

It localises to the cytoplasm. Functionally, component of the eukaryotic translation initiation factor 3 (eIF-3) complex, which is involved in protein synthesis of a specialized repertoire of mRNAs and, together with other initiation factors, stimulates binding of mRNA and methionyl-tRNAi to the 40S ribosome. The eIF-3 complex specifically targets and initiates translation of a subset of mRNAs involved in cell proliferation. This chain is Eukaryotic translation initiation factor 3 subunit F-1, found in Drosophila willistoni (Fruit fly).